We begin with the raw amino-acid sequence, 373 residues long: 3-dehydroquinate synthase (373 aa).

NAD(+) contacts are provided by residues 107 to 111 (GVIGD), 131 to 132 (TS), Lys-144, and Lys-153. 3 residues coordinate Zn(2+): Glu-186, His-249, and His-267.

This sequence belongs to the sugar phosphate cyclases superfamily. Dehydroquinate synthase family. Co(2+) serves as cofactor. Zn(2+) is required as a cofactor. It depends on NAD(+) as a cofactor.

The protein localises to the cytoplasm. It carries out the reaction 7-phospho-2-dehydro-3-deoxy-D-arabino-heptonate = 3-dehydroquinate + phosphate. It functions in the pathway metabolic intermediate biosynthesis; chorismate biosynthesis; chorismate from D-erythrose 4-phosphate and phosphoenolpyruvate: step 2/7. Its function is as follows. Catalyzes the conversion of 3-deoxy-D-arabino-heptulosonate 7-phosphate (DAHP) to dehydroquinate (DHQ). The sequence is that of 3-dehydroquinate synthase from Ruegeria sp. (strain TM1040) (Silicibacter sp.).